The chain runs to 121 residues: Large ribosomal subunit protein bL21 (121 aa).

The protein belongs to the bacterial ribosomal protein bL21 family. Part of the 50S ribosomal subunit. Contacts protein L20.

Functionally, this protein binds to 23S rRNA in the presence of protein L20. The polypeptide is Large ribosomal subunit protein bL21 (Synechococcus sp. (strain CC9605)).